Here is a 71-residue protein sequence, read N- to C-terminus: Small ribosomal subunit protein bS21 (71 aa).

The protein belongs to the bacterial ribosomal protein bS21 family.

The protein is Small ribosomal subunit protein bS21 of Shewanella sp. (strain MR-4).